Here is a 353-residue protein sequence, read N- to C-terminus: MDLQASLLSTGPNASNISDGQDNFTLAGPPPRTRSVSYINIIMPSVFGTICLLGIVGNSTVIFAVVKKSKLHWCSNVPDIFIINLSVVDLLFLLGMPFMIHQLMGNGVWHFGETMCTLITAMDANSQFTSTYILTAMAIDRYLATVHPISSTKFRKPSMATLVICLLWALSFISITPVWLYARLIPFPGGAVGCGIRLPNPDTDLYWFTLYQFFLAFALPFVVITAAYVKILQRMTSSVAPASQRSIRLRTKRVTRTAIAICLVFFVCWAPYYVLQLTQLSISRPTLTFVYLYNAAISLGYANSCLNPFVYIVLCETFRKRLVLSVKPAAQGQLRTVSNAQTADEERTESKGT.

Over 1–45 the chain is Extracellular; that stretch reads MDLQASLLSTGPNASNISDGQDNFTLAGPPPRTRSVSYINIIMPS. 3 N-linked (GlcNAc...) asparagine glycosylation sites follow: asparagine 13, asparagine 16, and asparagine 23. The chain crosses the membrane as a helical span at residues 46–66; that stretch reads VFGTICLLGIVGNSTVIFAVV. The Cytoplasmic segment spans residues 67 to 79; it reads KKSKLHWCSNVPD. The helical transmembrane segment at 80–100 threads the bilayer; the sequence is IFIINLSVVDLLFLLGMPFMI. Topologically, residues 101 to 116 are extracellular; sequence HQLMGNGVWHFGETMC. A disulfide bridge links cysteine 116 with cysteine 194. The helical transmembrane segment at 117-139 threads the bilayer; the sequence is TLITAMDANSQFTSTYILTAMAI. The Cytoplasmic segment spans residues 140–161; the sequence is DRYLATVHPISSTKFRKPSMAT. A helical transmembrane segment spans residues 162-182; sequence LVICLLWALSFISITPVWLYA. Topologically, residues 183–204 are extracellular; it reads RLIPFPGGAVGCGIRLPNPDTD. Residues 205–225 form a helical membrane-spanning segment; that stretch reads LYWFTLYQFFLAFALPFVVIT. Over 226 to 256 the chain is Cytoplasmic; that stretch reads AAYVKILQRMTSSVAPASQRSIRLRTKRVTR. A helical membrane pass occupies residues 257–277; the sequence is TAIAICLVFFVCWAPYYVLQL. The Extracellular portion of the chain corresponds to 278-294; sequence TQLSISRPTLTFVYLYN. The helical transmembrane segment at 295-315 threads the bilayer; sequence AAISLGYANSCLNPFVYIVLC. Residues 316 to 353 lie on the Cytoplasmic side of the membrane; it reads ETFRKRLVLSVKPAAQGQLRTVSNAQTADEERTESKGT.

It belongs to the G-protein coupled receptor 1 family. As to quaternary structure, interacts with NCDN. In terms of tissue distribution, expressed predominantly in the brain. Expression in brain is negatively regulated by leptin. Also found in the epithelium of the tongue and kidney.

The protein localises to the cell membrane. Its function is as follows. Receptor for melanin-concentrating hormone, coupled to both G proteins that inhibit adenylyl cyclase and G proteins that activate phosphoinositide hydrolysis. The chain is Melanin-concentrating hormone receptor 1 from Mus musculus (Mouse).